Consider the following 101-residue polypeptide: MAKQSMKAREAKRAKLVAKFAEKRAALKVLISDVNASEEERWDAVLKLQALPRDSSASRQRNRCNQTGRPHGYLRKFGLSRIKVREACMKGEIPGLRKASW.

This sequence belongs to the universal ribosomal protein uS14 family. In terms of assembly, part of the 30S ribosomal subunit. Contacts proteins S3 and S10.

Functionally, binds 16S rRNA, required for the assembly of 30S particles and may also be responsible for determining the conformation of the 16S rRNA at the A site. The protein is Small ribosomal subunit protein uS14 of Aliivibrio fischeri (strain MJ11) (Vibrio fischeri).